Here is a 245-residue protein sequence, read N- to C-terminus: Uridylate kinase (245 aa).

Residue 15-18 participates in ATP binding; it reads KLSG. Residues 23–28 are involved in allosteric activation by GTP; that stretch reads GEEGFG. Gly-57 contacts UMP. Residues Gly-58 and Arg-62 each coordinate ATP. UMP contacts are provided by residues Asp-77 and 138–145; that span reads TGNPFCTT. Positions 165, 171, and 174 each coordinate ATP.

Belongs to the UMP kinase family. In terms of assembly, homohexamer.

The protein resides in the cytoplasm. It carries out the reaction UMP + ATP = UDP + ADP. It functions in the pathway pyrimidine metabolism; CTP biosynthesis via de novo pathway; UDP from UMP (UMPK route): step 1/1. With respect to regulation, allosterically activated by GTP. Inhibited by UTP. In terms of biological role, catalyzes the reversible phosphorylation of UMP to UDP. The protein is Uridylate kinase of Shewanella putrefaciens (strain CN-32 / ATCC BAA-453).